The sequence spans 239 residues: LexA repressor (239 aa).

Residues 1–40 (MTEAATGPEGADPSRAARSLPGRPPGIRADSSGLTDRQRR) are disordered. The segment at residues 58–78 (MREIGQAVGLSSTSSVAHQLM) is a DNA-binding region (H-T-H motif). Over residues 89 to 100 (DPHRPRAYEVRG) the composition is skewed to basic and acidic residues. Positions 89–116 (DPHRPRAYEVRGSDQPSAQPADTSGKPA) are disordered. Residues Ser-163 and Lys-200 each act as for autocatalytic cleavage activity in the active site.

Belongs to the peptidase S24 family. In terms of assembly, homodimer.

The catalysed reaction is Hydrolysis of Ala-|-Gly bond in repressor LexA.. Represses a number of genes involved in the response to DNA damage (SOS response), including recA and lexA. In the presence of single-stranded DNA, RecA interacts with LexA causing an autocatalytic cleavage which disrupts the DNA-binding part of LexA, leading to derepression of the SOS regulon and eventually DNA repair. The protein is LexA repressor of Streptomyces clavuligerus.